A 597-amino-acid polypeptide reads, in one-letter code: uncharacterized protein (597 aa).

2 disordered regions span residues 165–197 and 278–344; these read NSRAVPPPAPPNPPKMEKHMSHDTSGRGSIFSK and ERSS…RGTL. Pro residues predominate over residues 169-178; it reads VPPPAPPNPP. The segment covering 179 to 189 has biased composition (basic and acidic residues); it reads KMEKHMSHDTS. The segment covering 293–313 has biased composition (low complexity); that stretch reads STEVSITSSSPSPSSSSSTST. The SAM domain maps to 402–465; sequence WSLDDVLLWL…LDDLSKIIEN (64 aa). The segment at 576-597 is disordered; it reads EESQQKESSSSGISSSPQTPTE. A compositionally biased stretch (low complexity) spans 581–597; that stretch reads KESSSSGISSSPQTPTE.

This is an uncharacterized protein from Caenorhabditis elegans.